The following is a 481-amino-acid chain: Phototropic-responsive NPH3 family protein NPY4 (481 aa).

The BTB domain occupies 29–102; the sequence is TEIIIIIGNV…CYGITVTLNA (74 aa). Residues 207-450 enclose the NPH3 domain; the sequence is DWWVEDLCEL…VQVLFFEQIR (244 aa). Tyrosine 391 bears the Phosphotyrosine mark. Residues 456–481 form a disordered region; the sequence is TGYSTPELTTTTLNTEDDEWDHEKEF. A compositionally biased stretch (low complexity) spans 460–469; it reads TPELTTTTLN.

The protein belongs to the NPH3 family. As to expression, expressed in the hypocotyl cells that would differentiate into vascular bundles. Highly expressed in primary root tips and radicles.

It localises to the cell membrane. Its subcellular location is the cytoplasm. It is found in the cytosol. The protein operates within protein modification; protein ubiquitination. Functionally, may act as a substrate-specific adapter of an E3 ubiquitin-protein ligase complex (CUL3-RBX1-BTB) which mediates the ubiquitination and subsequent proteasomal degradation of target proteins. Plays an essential role in auxin-mediated organogenesis and in root gravitropic responses through the control of PIN proteins (e.g. PIN1 and PIN2) polarity in the root tip endodermal cell layer and in shoot epidermis. Recruited to the plasma membrane by PINs (e.g. PIN1 and PIN2) and, in concert with AGC kinases-mediated (e.g. D6PK and PID) PINs phosphorylation, maintains their polarity through limiting lateral diffusion-based escape. The protein is Phototropic-responsive NPH3 family protein NPY4 of Arabidopsis thaliana (Mouse-ear cress).